Reading from the N-terminus, the 213-residue chain is tRNA (guanine-N(7)-)-methyltransferase (213 aa).

The S-adenosyl-L-methionine site is built by Glu-44, Glu-69, Asp-96, and Asp-118. Asp-118 is an active-site residue. Substrate is bound by residues Lys-122, Asp-154, and 191-194; that span reads TEYE.

It belongs to the class I-like SAM-binding methyltransferase superfamily. TrmB family.

The enzyme catalyses guanosine(46) in tRNA + S-adenosyl-L-methionine = N(7)-methylguanosine(46) in tRNA + S-adenosyl-L-homocysteine. The protein operates within tRNA modification; N(7)-methylguanine-tRNA biosynthesis. Catalyzes the formation of N(7)-methylguanine at position 46 (m7G46) in tRNA. In Exiguobacterium sibiricum (strain DSM 17290 / CCUG 55495 / CIP 109462 / JCM 13490 / 255-15), this protein is tRNA (guanine-N(7)-)-methyltransferase.